Reading from the N-terminus, the 1104-residue chain is Protein transport protein SEC31 homolog B (1104 aa).

7 WD repeats span residues 5–45 (KGVG…EIFK), 62–109 (PSSE…GSQP), 120–160 (VHKG…EPSH), 170–210 (ATQG…PIIN), 214–257 (SVRR…SPVR), 261–301 (GHQR…IVAE), and 304–344 (AGNN…RYGV). Threonine 526 carries the phosphothreonine modification. Positions 527–562 (PVSTSAKDFMPSDTDFSTKGEETQEMQEEEEESSDP) are disordered. The segment covering 549 to 560 (TQEMQEEEEESS) has biased composition (acidic residues). A WD 8 repeat occupies 662 to 707 (TLCDALASKLMAAGNTLAAVLCYICAGNVDRTVEIWSRSLANERDG). Disordered stretches follow at residues 782–811 (LSAE…PTQA), 851–874 (HQAQ…PSMR), 892–931 (QQPT…QYPN), and 952–994 (TPGV…SNVP). 3 stretches are compositionally biased toward polar residues: residues 786-811 (PETN…PTQA), 863-874 (PAPTSNAQPSMR), and 892-908 (QQPT…SNNA). The segment covering 959-977 (SVQPASPPTQQAAAQAAPA) has biased composition (low complexity).

It belongs to the WD repeat SEC31 family. In terms of assembly, interacts with SEC13A and SEC13B.

It is found in the golgi apparatus. It localises to the endoplasmic reticulum. Functionally, required for protein transport from the endoplasmic reticulum to the Golgi apparatus. This Arabidopsis thaliana (Mouse-ear cress) protein is Protein transport protein SEC31 homolog B.